The following is a 103-amino-acid chain: Histone H4 type VIII (103 aa).

Positions 1–14 are enriched in gly residues; that stretch reads MSGRGKGGKGLGKG. A disordered region spans residues 1-20; sequence MSGRGKGGKGLGKGGAKRHR. Ser-2 carries the N-acetylserine modification. A Phosphoserine modification is found at Ser-2. Arg-4 is subject to Asymmetric dimethylarginine; by PRMT1; alternate. Position 4 is a citrulline; alternate (Arg-4). At Arg-4 the chain carries Omega-N-methylarginine; by PRMT1; alternate. Residue Arg-4 is modified to Symmetric dimethylarginine; by PRMT5 and PRMT7; alternate. Lys-6, Lys-9, Lys-13, and Lys-17 each carry N6-(2-hydroxyisobutyryl)lysine; alternate. N6-acetyl-N6-methyllysine; alternate is present on Lys-6. Residues Lys-6, Lys-9, Lys-13, and Lys-17 each carry the N6-acetyllysine modification. N6-butyryllysine; alternate is present on residues Lys-6, Lys-9, Lys-13, and Lys-17. An N6-glutaryllysine; alternate modification is found at Lys-6. An N6-lactoyllysine; alternate mark is found at Lys-6, Lys-9, Lys-13, and Lys-17. Residue Lys-9 is modified to N6-propionyllysine; alternate. Residue Lys-13 is modified to N6-acetyl-N6-methyllysine; alternate. Position 13 is an N6-glutaryllysine; alternate (Lys-13). An N6-methyllysine; alternate modification is found at Lys-13. Lys-17 carries the post-translational modification N6-propionyllysine; alternate. Lys-21 is modified (N6-methyllysine; alternate). N6,N6,N6-trimethyllysine; alternate is present on Lys-21. Lys-21 bears the N6,N6-dimethyllysine; alternate mark. 2 positions are modified to N6-(2-hydroxyisobutyryl)lysine; alternate: Lys-32 and Lys-45. Lys-32 is modified (N6-acetyllysine). Residues Lys-32 and Lys-45 each carry the N6-butyryllysine; alternate modification. N6-glutaryllysine; alternate is present on Lys-32. At Lys-32 the chain carries N6-lactoyllysine; alternate. 2 positions are modified to N6-propionyllysine; alternate: Lys-32 and Lys-45. Residue Lys-32 is modified to N6-succinyllysine; alternate. Residue Lys-32 forms a Glycyl lysine isopeptide (Lys-Gly) (interchain with G-Cter in UFM1); alternate linkage. Ser-48 is subject to Phosphoserine. Tyr-52 carries the post-translational modification Phosphotyrosine. An N6-acetyllysine modification is found at Lys-60. N6-glutaryllysine; alternate occurs at positions 60, 78, and 80. Position 60 is an N6-(2-hydroxyisobutyryl)lysine (Lys-60). Lys-78 and Lys-80 each carry N6-(2-hydroxyisobutyryl)lysine; alternate. 2 positions are modified to N6-butyryllysine; alternate: Lys-78 and Lys-80. Lys-78 carries the N6-lactoyllysine; alternate modification. N6-propionyllysine; alternate occurs at positions 78 and 80. Lys-78 carries the post-translational modification N6-succinyllysine. Lys-80 carries the post-translational modification N6-acetyllysine. Tyr-89 is subject to Phosphotyrosine. The residue at position 92 (Lys-92) is an N6-(2-hydroxyisobutyryl)lysine; alternate. Lys-92 carries the N6-butyryllysine; alternate modification. Lys-92 carries the post-translational modification N6-glutaryllysine; alternate. Lys-92 is modified (N6-lactoyllysine; alternate). Lys-92 bears the N6-propionyllysine; alternate mark. The residue at position 92 (Lys-92) is an N6-succinyllysine; alternate. Lys-92 is modified (N6-acetyllysine; alternate). A Glycyl lysine isopeptide (Lys-Gly) (interchain with G-Cter in ubiquitin); alternate cross-link involves residue Lys-92.

Belongs to the histone H4 family. As to quaternary structure, the nucleosome is a histone octamer containing two molecules each of H2A, H2B, H3 and H4 assembled in one H3-H4 heterotetramer and two H2A-H2B heterodimers. The octamer wraps approximately 147 bp of DNA. In terms of processing, acetylation at Lys-6 (H4K5ac), Lys-9 (H4K8ac), Lys-13 (H4K12ac) and Lys-17 (H4K16ac) occurs in coding regions of the genome but not in heterochromatin. Citrullination at Arg-4 (H4R3ci) by PADI4 impairs methylation. Post-translationally, monomethylation and asymmetric dimethylation at Arg-4 (H4R3me1 and H4R3me2a, respectively) by PRMT1 favors acetylation at Lys-9 (H4K8ac) and Lys-13 (H4K12ac). Demethylation is performed by JMJD6. Symmetric dimethylation on Arg-4 (H4R3me2s) by the PRDM1/PRMT5 complex may play a crucial role in the germ-cell lineage. In terms of processing, monomethylated, dimethylated or trimethylated at Lys-21 (H4K20me1, H4K20me2, H4K20me3). Monomethylation is performed by KMT5A/SET8. Trimethylation is performed by KMT5B and KMT5C and induces gene silencing. Monomethylated at Lys-13 (H4K12me1) by N6AMT1; H4K12me1 modification is present at the promoters of numerous genes encoding cell cycle regulators. Acetyl-methylated at Lys-6 and Lys-13 (H4K5acme and H4K12acme, respectively), acetyl-methylation is an epigenetic mark of active chromatin associated with increased transcriptional initiation. Acetyl-methylation is formed by acetylation by EP300/p300 of lysine residues that are already monomethylated on the same side chain. H4K5acme and H4K12acme marks specifically bind BRD2. Post-translationally, ubiquitinated by the CUL4-DDB-RBX1 complex in response to ultraviolet irradiation. This may weaken the interaction between histones and DNA and facilitate DNA accessibility to repair proteins. Monoubiquitinated at Lys-92 of histone H4 (H4K91ub1) in response to DNA damage. The exact role of H4K91ub1 in DNA damage response is still unclear but it may function as a licensing signal for additional histone H4 post-translational modifications such as H4 Lys-21 methylation (H4K20me). In terms of processing, sumoylated, which is associated with transcriptional repression. Butyrylation of histones marks active promoters and competes with histone acetylation. Post-translationally, glutarylation at Lys-92 (H4K91glu) destabilizes nucleosomes by promoting dissociation of the H2A-H2B dimers from nucleosomes. In terms of processing, ufmylated; monofmylated by UFL1 at Lys-32 (H4K31Ufm1) in response to DNA damage. Lactylated in macrophages by EP300/P300 by using lactoyl-CoA directly derived from endogenous or exogenous lactate, leading to stimulates gene transcription. Delactylated by SIRT3 at Lys-17 (H4K16la).

The protein resides in the nucleus. Its subcellular location is the chromosome. In terms of biological role, core component of nucleosome. Nucleosomes wrap and compact DNA into chromatin, limiting DNA accessibility to the cellular machineries which require DNA as a template. Histones thereby play a central role in transcription regulation, DNA repair, DNA replication and chromosomal stability. DNA accessibility is regulated via a complex set of post-translational modifications of histones, also called histone code, and nucleosome remodeling. The sequence is that of Histone H4 type VIII (H4-VIII) from Gallus gallus (Chicken).